We begin with the raw amino-acid sequence, 101 residues long: Ubiquitin-related modifier 1 homolog (101 aa).

Residue G101 is modified to 1-thioglycine. Residue G101 forms a Glycyl lysine isopeptide (Gly-Lys) (interchain with K-? in acceptor proteins) linkage.

Belongs to the URM1 family. As to quaternary structure, interacts with cer. C-terminal thiocarboxylation occurs in 2 steps, it is first acyl-adenylated (-COAMP) via the hesA/moeB/thiF part of the MOCS3 homolog, then thiocarboxylated (-COSH) via the rhodanese domain of the MOCS3 homolog.

The protein resides in the cytoplasm. It participates in tRNA modification; 5-methoxycarbonylmethyl-2-thiouridine-tRNA biosynthesis. Its function is as follows. Acts as a sulfur carrier required for 2-thiolation of mcm(5)S(2)U at tRNA wobble positions of cytosolic tRNA(Lys), tRNA(Glu) and tRNA(Gln). Serves as sulfur donor in tRNA 2-thiolation reaction by being thiocarboxylated (-COSH) at its C-terminus by MOCS3. The sulfur is then transferred to tRNA to form 2-thiolation of mcm(5)S(2)U. Also acts as a ubiquitin-like protein (UBL) that is covalently conjugated via an isopeptide bond to lysine residues of target proteins such as Prx2/Jafrac1, Ciao1, Eip71CD and GILT1. The thiocarboxylated form serves as substrate for conjugation and oxidative stress specifically induces the formation of UBL-protein conjugates. This is Ubiquitin-related modifier 1 homolog from Drosophila ananassae (Fruit fly).